Reading from the N-terminus, the 266-residue chain is 3-methyl-2-oxobutanoate hydroxymethyltransferase (266 aa).

Mg(2+) is bound by residues Asp-45 and Asp-84. Residues Asp-45–Ser-46, Asp-84, and Lys-112 contribute to the 3-methyl-2-oxobutanoate site. Position 114 (Glu-114) interacts with Mg(2+). The Proton acceptor role is filled by Glu-181.

It belongs to the PanB family. As to quaternary structure, homodecamer; pentamer of dimers. It depends on Mg(2+) as a cofactor.

It is found in the cytoplasm. The catalysed reaction is 3-methyl-2-oxobutanoate + (6R)-5,10-methylene-5,6,7,8-tetrahydrofolate + H2O = 2-dehydropantoate + (6S)-5,6,7,8-tetrahydrofolate. It participates in cofactor biosynthesis; (R)-pantothenate biosynthesis; (R)-pantoate from 3-methyl-2-oxobutanoate: step 1/2. Its function is as follows. Catalyzes the reversible reaction in which hydroxymethyl group from 5,10-methylenetetrahydrofolate is transferred onto alpha-ketoisovalerate to form ketopantoate. The sequence is that of 3-methyl-2-oxobutanoate hydroxymethyltransferase from Pseudomonas savastanoi pv. phaseolicola (strain 1448A / Race 6) (Pseudomonas syringae pv. phaseolicola (strain 1448A / Race 6)).